Here is a 371-residue protein sequence, read N- to C-terminus: N-acetyldiaminopimelate deacetylase (371 aa).

Residue Asp-68 is part of the active site. Glu-127 functions as the Proton acceptor in the catalytic mechanism.

Belongs to the peptidase M20A family. N-acetyldiaminopimelate deacetylase subfamily.

It carries out the reaction N-acetyl-(2S,6S)-2,6-diaminopimelate + H2O = (2S,6S)-2,6-diaminopimelate + acetate. The protein operates within amino-acid biosynthesis; L-lysine biosynthesis via DAP pathway; LL-2,6-diaminopimelate from (S)-tetrahydrodipicolinate (acetylase route): step 3/3. Functionally, catalyzes the conversion of N-acetyl-diaminopimelate to diaminopimelate and acetate. The sequence is that of N-acetyldiaminopimelate deacetylase from Listeria welshimeri serovar 6b (strain ATCC 35897 / DSM 20650 / CCUG 15529 / CIP 8149 / NCTC 11857 / SLCC 5334 / V8).